We begin with the raw amino-acid sequence, 165 residues long: Endoribonuclease YbeY (165 aa).

Residues histidine 130, histidine 134, and histidine 140 each coordinate Zn(2+).

Belongs to the endoribonuclease YbeY family. The cofactor is Zn(2+).

It is found in the cytoplasm. Its function is as follows. Single strand-specific metallo-endoribonuclease involved in late-stage 70S ribosome quality control and in maturation of the 3' terminus of the 16S rRNA. The chain is Endoribonuclease YbeY from Streptococcus thermophilus (strain CNRZ 1066).